The following is a 625-amino-acid chain: Probable potassium transport system protein Kup (625 aa).

The next 12 membrane-spanning stretches (helical) occupy residues Leu10 to Leu30, Leu50 to Val70, Tyr102 to Ile122, Leu135 to Val155, Phe172 to Ile192, Gly214 to Leu234, Phe251 to Leu271, Leu284 to Ser304, Ile340 to Phe360, Ala369 to Ile389, Leu397 to Ala417, and Leu422 to Thr442.

Belongs to the HAK/KUP transporter (TC 2.A.72) family.

Its subcellular location is the cell inner membrane. The catalysed reaction is K(+)(in) + H(+)(in) = K(+)(out) + H(+)(out). Its function is as follows. Transport of potassium into the cell. Likely operates as a K(+):H(+) symporter. The polypeptide is Probable potassium transport system protein Kup (Herminiimonas arsenicoxydans).